We begin with the raw amino-acid sequence, 226 residues long: Cytidylate kinase (226 aa).

Position 12-20 (12-20 (GPSGAGKGT)) interacts with ATP.

Belongs to the cytidylate kinase family. Type 1 subfamily.

The protein localises to the cytoplasm. The enzyme catalyses CMP + ATP = CDP + ADP. It catalyses the reaction dCMP + ATP = dCDP + ADP. The chain is Cytidylate kinase from Vibrio vulnificus (strain CMCP6).